Here is a 616-residue protein sequence, read N- to C-terminus: Adenylosuccinate synthetase 2 (616 aa).

The disordered stretch occupies residues 1–26; the sequence is MDKQAERDQSAGPVKTPQETQPPAHN. Residues 17-26 show a composition bias toward polar residues; that stretch reads PQETQPPAHN. GTP contacts are provided by residues 87-93 and 117-119; these read GDEGKGK and GHT. Asp-88 functions as the Proton acceptor in the catalytic mechanism. Positions 88 and 117 each coordinate Mg(2+). Residues 88–91, 115–118, Thr-202, Lys-216, Gln-328, Thr-343, and Lys-472 contribute to the IMP site; these read DEGK and NAGH. Residue His-118 is the Proton donor of the active site. 468-474 serves as a coordination point for substrate; the sequence is AVTKKPR. Residues Arg-474 and 603–605 each bind GTP; that span reads GNG.

The protein belongs to the adenylosuccinate synthetase family. As to quaternary structure, homodimer. Requires Mg(2+) as cofactor.

The protein localises to the cytoplasm. It catalyses the reaction IMP + L-aspartate + GTP = N(6)-(1,2-dicarboxyethyl)-AMP + GDP + phosphate + 2 H(+). Its pathway is purine metabolism; AMP biosynthesis via de novo pathway; AMP from IMP: step 1/2. Functionally, plays an important role in the salvage pathway for purine nucleotide biosynthesis. Catalyzes the first committed step in the biosynthesis of AMP from IMP. This Trypanosoma cruzi (strain CL Brener) protein is Adenylosuccinate synthetase 2.